A 522-amino-acid polypeptide reads, in one-letter code: Glutathione reductase, mitochondrial (522 aa).

A mitochondrion-targeting transit peptide spans 1 to 43 (MALLPRALSAGAGPSWRRAARAFRGFLLLLPEPAALTRALSRA). 2 residues coordinate FAD: serine 74 and glycine 75. Serine 74 serves as a coordination point for glutathione. Position 81 (arginine 81) interacts with glutathione. An FAD-binding site is contributed by glutamate 94. Lysine 97 is subject to N6-acetyllysine. FAD-binding residues include threonine 101, cysteine 102, and lysine 110. Cysteines 102 and 107 form a disulfide. Position 158 (tyrosine 158) interacts with glutathione. Position 174 (alanine 174) interacts with FAD. NADP(+)-binding residues include alanine 239, isoleucine 242, glutamate 245, arginine 262, arginine 268, and glycine 334. Aspartate 375 contributes to the FAD binding site. Leucine 381 contacts NADP(+). Threonine 383 provides a ligand contact to FAD. Arginine 391 is a glutathione binding site. Valine 414 serves as a coordination point for NADP(+). An FAD-binding site is contributed by histidine 511. Catalysis depends on histidine 511, which acts as the Proton acceptor.

Belongs to the class-I pyridine nucleotide-disulfide oxidoreductase family. Homodimer; disulfide-linked. Requires FAD as cofactor.

It is found in the mitochondrion. The protein resides in the cytoplasm. The enzyme catalyses 2 glutathione + NADP(+) = glutathione disulfide + NADPH + H(+). Its function is as follows. Catalyzes the reduction of glutathione disulfide (GSSG) to reduced glutathione (GSH). Constitutes the major mechanism to maintain a high GSH:GSSG ratio in the cytosol. The protein is Glutathione reductase, mitochondrial (GSR) of Homo sapiens (Human).